We begin with the raw amino-acid sequence, 234 residues long: MSTFGGPGTAARDDLAQDFVAFAVEAGVLRFGEFKTKAGRLSPYFFNAGLFDDGAKLGRLAEFYARRMQASGLAFDMIFGPAYKGITLAAAVAIELARLGRNLPYAYNRKETKDHGEGGSLVGAKLHGRVVIIDDVISAGTSVRESVAMIRAAGAEPCGVAIALDRQERATETTQDGVRDADHSAVQFVQRELGLAVCAIATLSDLLQYLARQADPALAQHLPRVQAYRDRYGV.

Lys37 contributes to the 5-phospho-alpha-D-ribose 1-diphosphate binding site. 45–46 (FF) lines the orotate pocket. Residues 83-84 (YK), Arg109, Lys110, Lys113, His115, and 134-142 (DDVISAGTS) each bind 5-phospho-alpha-D-ribose 1-diphosphate. Orotate-binding residues include Ser138 and Arg166.

The protein belongs to the purine/pyrimidine phosphoribosyltransferase family. PyrE subfamily. In terms of assembly, homodimer. Requires Mg(2+) as cofactor.

It catalyses the reaction orotidine 5'-phosphate + diphosphate = orotate + 5-phospho-alpha-D-ribose 1-diphosphate. The protein operates within pyrimidine metabolism; UMP biosynthesis via de novo pathway; UMP from orotate: step 1/2. In terms of biological role, catalyzes the transfer of a ribosyl phosphate group from 5-phosphoribose 1-diphosphate to orotate, leading to the formation of orotidine monophosphate (OMP). The chain is Orotate phosphoribosyltransferase from Methylibium petroleiphilum (strain ATCC BAA-1232 / LMG 22953 / PM1).